We begin with the raw amino-acid sequence, 475 residues long: Subtilisin-like protease PopC (475 aa).

Disordered regions lie at residues 1-27 (MKSYLLVPKESIETQARVGPRGTEQGE) and 57-106 (TLPG…QTGA). In terms of domain architecture, Peptidase S8 spans 165 to 475 (NRGMSSLAER…KTGKGLAVFR (311 aa)). Residues Asp201, His243, and Ser423 each act as charge relay system in the active site.

Belongs to the peptidase S8 family. As to quaternary structure, interacts with PopD in non-starving cells.

The protein localises to the cytoplasm. It localises to the periplasm. It is found in the secreted. Its activity is regulated as follows. In non-starving cells, secretion and protease activity are inhibited by formation of a cytoplasmic complex with PopD. In response to starvation, PopD is degraded in a RelA- and FtsH(D)-dependent manner, thereby releasing pre-formed PopC for secretion. Secreted and active during starvation, and rapidly degraded upon secretion. Secretion is significantly and reversibly reduced by carbonyl cyanide m-chlorophenyl hydrazine (CCCP), which dissipates or reduces the proton motive force (PMF), and by nigericin, which affects the pH gradient. Its function is as follows. Required for fruiting body formation, a multicellular developmental program that is induced in response to starvation. Acts as a subtilisin-like protease that directly cleaves the CsgA precursor protein (p25) on the cell surface to generate the intercellular C-signal protein (p17) in starving cells. Preferentially acts in cis, i.e. PopC secreted by a cell only cleaves p25 on that cell. May also be important for processing of other protein(s) that are important for development. This chain is Subtilisin-like protease PopC, found in Myxococcus xanthus (strain DK1622).